Reading from the N-terminus, the 576-residue chain is CDPK-related kinase 1 (576 aa).

A disordered region spans residues 1 to 39 (MGICHGKPVEQQSKSLPVSGETNEAPTNSQPPAKSSGFP). Gly2 carries N-myristoyl glycine lipidation. Residues 10–33 (EQQSKSLPVSGETNEAPTNSQPPA) are compositionally biased toward polar residues. The 263-residue stretch at 123–385 (YEIDGEVGRG…AAQALCHPWL (263 aa)) folds into the Protein kinase domain. Residues 129 to 137 (VGRGHFGYT) and Lys155 each bind ATP. The Proton acceptor role is filled by Asp251. Residue Ser291 is modified to Phosphoserine. Position 333 is a phosphoserine; by CPK1 and CPK34 (Ser333). Residues 390 to 420 (ELKIPSDMIIYKLVKVYIMSTSLRKSALAAL) are autoinhibitory domain. The calmodulin binding (CaMBD) stretch occupies residues 409-429 (STSLRKSALAALAKTLTVPQL). 4 consecutive EF-hand domains span residues 427–463 (PQLA…STDA), 464–499 (MKDS…VYQL), 500–539 (EAME…GPSV), and 542–571 (HVVL…VSSR). Ser442, Asn444, Tyr446, Lys483, Glu488, Asp519, Asn521, Glu528, Asp553, and Lys555 together coordinate Ca(2+). Residue Ser557 is modified to Phosphoserine.

Belongs to the protein kinase superfamily. Ser/Thr protein kinase family. CDPK subfamily. As to quaternary structure, binds calmodulin (CaM) in a calcium-dependent manner. Interacts with HSFA1A. Post-translationally, autophosphorylated.

It is found in the membrane. It catalyses the reaction L-seryl-[protein] + ATP = O-phospho-L-seryl-[protein] + ADP + H(+). It carries out the reaction L-threonyl-[protein] + ATP = O-phospho-L-threonyl-[protein] + ADP + H(+). Its activity is regulated as follows. Activated by calcium and calmodulin. Autophosphorylation may play an important role in the regulation of the kinase activity. Functionally, may play a role in signal transduction pathways that involve calcium as a second messenger. Serine/threonine kinase that phosphorylates histone H3. Confers thermotolerance; involved in the heat-shock-mediated calmodulin-dependent signal transduction leading to the activation of heat-shock transcription factors (HSFs); phosphorylates HSFA1A. The sequence is that of CDPK-related kinase 1 (CRK1) from Arabidopsis thaliana (Mouse-ear cress).